Here is a 301-residue protein sequence, read N- to C-terminus: Very-long-chain aldehyde decarbonylase GL1-10 (301 aa).

Transmembrane regions (helical) follow at residues 36-56, 94-114, and 187-207; these read VLFW…PLPV, FFLV…MVGI, and SFVG…WIVL. The 135-residue stretch at 131–265 folds into the Fatty acid hydroxylase domain; the sequence is LVYFLVEDYL…FTYCDYLYGT (135 aa).

Belongs to the sterol desaturase family. As to quaternary structure, homodimer. In terms of tissue distribution, expressed ubiquitously.

It is found in the endoplasmic reticulum membrane. The catalysed reaction is a long-chain fatty aldehyde + 2 NADPH + O2 + H(+) = a long-chain alkane + formate + 2 NADP(+) + H2O. Its function is as follows. Aldehyde decarbonylase involved in the conversion of aldehydes to alkanes. Core component of a very-long-chain alkane synthesis complex. The polypeptide is Very-long-chain aldehyde decarbonylase GL1-10 (Oryza sativa subsp. japonica (Rice)).